A 145-amino-acid chain; its full sequence is FAD synthase (145 aa).

ATP is bound by residues 5–6 (TF), 10–13 (HPGH), Asp-92, and Tyr-119.

It belongs to the archaeal FAD synthase family. As to quaternary structure, homodimer. It depends on a divalent metal cation as a cofactor.

It carries out the reaction FMN + ATP + H(+) = FAD + diphosphate. Its pathway is cofactor biosynthesis; FAD biosynthesis; FAD from FMN: step 1/1. Its function is as follows. Catalyzes the transfer of the AMP portion of ATP to flavin mononucleotide (FMN) to produce flavin adenine dinucleotide (FAD) coenzyme. The protein is FAD synthase of Methanothermus fervidus (strain ATCC 43054 / DSM 2088 / JCM 10308 / V24 S).